The sequence spans 69 residues: Small ribosomal subunit protein bS21 (69 aa).

It belongs to the bacterial ribosomal protein bS21 family.

The chain is Small ribosomal subunit protein bS21 from Hyphomonas neptunium (strain ATCC 15444).